The sequence spans 294 residues: Acetyl-coenzyme A carboxylase carboxyl transferase subunit beta (294 aa).

Positions 25-294 (VWTKCTSCEQ…PLVVPVDGSH (270 aa)) constitute a CoA carboxyltransferase N-terminal domain. Residues Cys-29, Cys-32, Cys-48, and Cys-51 each contribute to the Zn(2+) site. The C4-type zinc finger occupies 29–51 (CTSCEQVLYSAELERNLEVCPKC).

This sequence belongs to the AccD/PCCB family. In terms of assembly, acetyl-CoA carboxylase is a heterohexamer composed of biotin carboxyl carrier protein (AccB), biotin carboxylase (AccC) and two subunits each of ACCase subunit alpha (AccA) and ACCase subunit beta (AccD). It depends on Zn(2+) as a cofactor.

The protein resides in the cytoplasm. It catalyses the reaction N(6)-carboxybiotinyl-L-lysyl-[protein] + acetyl-CoA = N(6)-biotinyl-L-lysyl-[protein] + malonyl-CoA. The protein operates within lipid metabolism; malonyl-CoA biosynthesis; malonyl-CoA from acetyl-CoA: step 1/1. Component of the acetyl coenzyme A carboxylase (ACC) complex. Biotin carboxylase (BC) catalyzes the carboxylation of biotin on its carrier protein (BCCP) and then the CO(2) group is transferred by the transcarboxylase to acetyl-CoA to form malonyl-CoA. In Aliivibrio fischeri (strain MJ11) (Vibrio fischeri), this protein is Acetyl-coenzyme A carboxylase carboxyl transferase subunit beta.